The chain runs to 360 residues: Alpha-2-HS-glycoprotein (360 aa).

A signal peptide spans 1–15 (LVLLLSLAQLWSCHL). The region spanning 24-130 (YREHNCDDPE…QFTVLSAKCD (107 aa)) is the Cystatin fetuin-A-type 1 domain. Intrachain disulfides connect Cys-29-Cys-351, Cys-86-Cys-97, Cys-111-Cys-129, Cys-143-Cys-146, Cys-205-Cys-216, and Cys-227-Cys-244. Residue Asn-96 is glycosylated (N-linked (GlcNAc...) asparagine). Position 131 is a phosphoserine (Ser-131). Thr-132 carries the phosphothreonine modification. Position 135 is a phosphoserine (Ser-135). One can recognise a Cystatin fetuin-A-type 2 domain in the interval 141–252 (KLCPDCPLLT…TCTIFPAQPV (112 aa)). A glycan (N-linked (GlcNAc...) asparagine) is linked at Asn-153. The disordered stretch occupies residues 260–285 (VAGAAAVEPAPAVDPASPVSPPDGQS). Position 312 is a phosphothreonine (Thr-312). 3 positions are modified to phosphoserine: Ser-318, Ser-321, and Ser-323.

The protein belongs to the fetuin family. Phosphorylated by FAM20C in the extracellular medium. In terms of tissue distribution, bone marrow.

It is found in the secreted. In terms of biological role, a cell adhesion protein that binds immature cells of the granulocyte lineage. The chain is Alpha-2-HS-glycoprotein (AHSG) from Oryctolagus cuniculus (Rabbit).